Here is a 767-residue protein sequence, read N- to C-terminus: Pyrin (767 aa).

The region spanning 1–92 (MAKTLGDHLL…AEELRKATGT (92 aa)) is the Pyrin domain. Positions 94-219 (HLIEENRVGG…LQGLYNNAPG (126 aa)) are disordered. 3 stretches are compositionally biased toward polar residues: residues 126 to 142 (GTQQNNDESDTLPSSQA), 165 to 176 (LDSQTKPWTRST), and 183 to 208 (TQGTQSPGDKESTASAQLRRNVSSAG). Phosphoserine is present on Ser-241. Residues 311 to 346 (TSLIGEERCPTSWTENGNGSPETTESSGETAGSILS) are disordered. The segment covering 321–340 (TSWTENGNGSPETTESSGET) has biased composition (polar residues). The B box-type zinc finger occupies 439 to 481 (QSLPQCPRHMKQVLLLFCEDHREPICLICRLSLEHQGHRVRPI). Zn(2+) is bound by residues Cys-444, His-447, Cys-467, and His-473. The stretch at 481–510 (IEEAALEYKEQIREQLERLREMRGYVEEHR) forms a coiled coil. The tract at residues 489 to 647 (KEQIREQLER…CFSEMLSSEM (159 aa)) is required for homotrimerization and induction of pyroptosomes. The segment at 697–719 (GGSEPKDYLHPQPAQDTPELHEI) is disordered.

In terms of assembly, homotrimer. Interacts (via the B box-type zinc finger) with PSTPIP1. Interacts (via the B30.2/SPRY domain) with several components of the inflammasome complex, including CASP1 p20 and p10 subunits, CASP5, PYCARD, NLRP1, NLRP2 and NLRP3, as well as with unprocessed IL1B; this interaction may lead to autophagic degradation of these proteins. Component of the AIM2 PANoptosome complex, a multiprotein complex that drives inflammatory cell death (PANoptosis). Interacts with NFKBIA and RELA. Interacts weakly with VASP and ACTR3. Interacts with active ULK1 (phosphorylated on 'Ser-317') and BECN1 simultaneously. Also interacts with ATG16L1 (via WD repeats), and with ATG8 family members, including GABARAP, GABARAPL1 and, to a lesser extent, GABARAPL2, MAP1LC3A/LC3A and MAP1LC3C/LC3C. Interacts with TRIM21. Interacts with YWHAB, YWHAE, YWHAG, YWHAH, YWHAQ and YWHAZ; the interaction is required for the down-regulation of pyrin pro-inflammatory activity. In terms of processing, phosphorylation at Ser-241 is required for the interaction with 14-3-3 proteins and down-regulation of pyrin pro-inflammatory activity. Post-translationally, degraded along with the delivery of its substrates to autolysosomal compartments (at protein level). Expressed in spleen peripheral blood granulocytes. Not expressed in lymphocytes, thymus, testis, ovary, heart, brain, lung, liver, kidney and muscle.

Its subcellular location is the cytoplasm. It is found in the cytoskeleton. It localises to the cell projection. The protein resides in the ruffle. The protein localises to the lamellipodium. Its subcellular location is the cytoplasmic vesicle. It is found in the autophagosome. It localises to the nucleus. In terms of biological role, involved in the regulation of innate immunity and the inflammatory response in response to IFNG/IFN-gamma. Organizes autophagic machinery by serving as a platform for the assembly of ULK1, Beclin 1/BECN1, ATG16L1, and ATG8 family members and recognizes specific autophagy targets, thus coordinating target recognition with assembly of the autophagic apparatus and initiation of autophagy. Acts as an autophagy receptor for the degradation of several inflammasome components, including CASP1, NLRP1 and NLRP3, hence preventing excessive IL1B- and IL18-mediated inflammation. However, it can also have a positive effect in the inflammatory pathway, acting as an innate immune sensor that triggers PYCARD/ASC specks formation, caspase-1 activation, and IL1B and IL18 production. Together with AIM2, also acts as a mediator of pyroptosis, necroptosis and apoptosis (PANoptosis), an integral part of host defense against pathogens, in response to bacterial infection. It is required for PSTPIP1-induced PYCARD/ASC oligomerization and inflammasome formation. Recruits PSTPIP1 to inflammasomes, and is required for PSTPIP1 oligomerization. This is Pyrin from Mus musculus (Mouse).